A 217-amino-acid chain; its full sequence is MRVRNRKGAGEMLAENAHIVVENPADFKGRWSERFGNDHPIHIEVGCGKGAFITGMAALHPEINYIAIDMQLSVLSYALDKAIEADLPNVQMMLVDGAALSEYFADGEIDQVYLNFSDPWPKGRHEKRRLTYKSFLATYEKILRPEGEIHFKTDNRGLFEYSLVSLANYGMELKKVWLDLHQDEEFAPQNVMTEYEQKFSQKGQVIYRLEAKFLPKK.

S-adenosyl-L-methionine-binding residues include Glu-44, Asp-69, Asp-96, and Asp-118. Asp-118 is an active-site residue. A substrate-binding site is contributed by Lys-122. An interaction with RNA region spans residues Arg-124 to Arg-129. Residues Asp-154 and Thr-193–Glu-196 each bind substrate.

The protein belongs to the class I-like SAM-binding methyltransferase superfamily. TrmB family.

It carries out the reaction guanosine(46) in tRNA + S-adenosyl-L-methionine = N(7)-methylguanosine(46) in tRNA + S-adenosyl-L-homocysteine. The protein operates within tRNA modification; N(7)-methylguanine-tRNA biosynthesis. Catalyzes the formation of N(7)-methylguanine at position 46 (m7G46) in tRNA. The polypeptide is tRNA (guanine-N(7)-)-methyltransferase (Lactococcus lactis subsp. lactis (strain IL1403) (Streptococcus lactis)).